The primary structure comprises 410 residues: Peptidase T (410 aa).

Histidine 79 is a binding site for Zn(2+). Aspartate 81 is a catalytic residue. Aspartate 142 contacts Zn(2+). Glutamate 176 serves as the catalytic Proton acceptor. Residues glutamate 177, aspartate 199, and histidine 381 each coordinate Zn(2+).

This sequence belongs to the peptidase M20B family. It depends on Zn(2+) as a cofactor.

It is found in the cytoplasm. The enzyme catalyses Release of the N-terminal residue from a tripeptide.. Its function is as follows. Cleaves the N-terminal amino acid of tripeptides. This chain is Peptidase T, found in Bacillus thuringiensis (strain Al Hakam).